Here is a 1269-residue protein sequence, read N- to C-terminus: Myb-binding protein 1A-like protein (1269 aa).

Positions 708 to 783 are disordered; that stretch reads DPNKDEDESG…EEDEAMEEGQ (76 aa). Positions 721 to 730 are enriched in basic and acidic residues; sequence TDDKKRKLKE. Residues 731-783 are compositionally biased toward acidic residues; sequence EDEDDDDEEEDDDNDEGDDDDDDDDEEEGGEEGEESSDSSDDEEEDEAMEEGQ. A Phosphoserine modification is found at S810. The interval 1163-1269 is disordered; the sequence is VKKVPEAEQT…KKKKKGADGE (107 aa). Basic residues predominate over residues 1177 to 1195; it reads KKKKGFLPETKKRKNRKKP. Positions 1199–1211 are enriched in basic and acidic residues; sequence EGKETETPVEKTP. Composition is skewed to basic residues over residues 1221–1232 and 1256–1269; these read NKNKKKNKKRKQ and KQKKKKKKKGADGE.

It belongs to the MYBBP1A family.

The protein resides in the nucleus. The protein localises to the nucleolus. Functionally, may activate or repress transcription via interactions with sequence specific DNA-binding proteins. May play a role in the repression of the circadian clock gene expression. In Danio rerio (Zebrafish), this protein is Myb-binding protein 1A-like protein (mybbp1a).